The primary structure comprises 323 residues: Dehydrogenase/reductase SDR family member 7B (323 aa).

At M1 to T4 the chain is on the cytoplasmic side. Residues S5 to L25 form a helical; Signal-anchor for type II membrane protein membrane-spanning segment. At Q26–L272 the chain is on the lumenal side. Residues S46 and L48 each contribute to the NAD(+) site. S178 provides a ligand contact to substrate. NAD(+)-binding residues include Y191, K195, and T226. Y191 (proton acceptor) is an active-site residue.

Belongs to the short-chain dehydrogenases/reductases (SDR) family.

The protein resides in the endoplasmic reticulum membrane. Its function is as follows. Putative oxidoreductase. The protein is Dehydrogenase/reductase SDR family member 7B (dhrs7b) of Xenopus laevis (African clawed frog).